A 252-amino-acid chain; its full sequence is Hydroxyacylglutathione hydrolase (252 aa).

Positions 54, 56, 58, 59, 111, 130, and 170 each coordinate Zn(2+).

It belongs to the metallo-beta-lactamase superfamily. Glyoxalase II family. Monomer. Zn(2+) serves as cofactor.

It carries out the reaction an S-(2-hydroxyacyl)glutathione + H2O = a 2-hydroxy carboxylate + glutathione + H(+). Its pathway is secondary metabolite metabolism; methylglyoxal degradation; (R)-lactate from methylglyoxal: step 2/2. Thiolesterase that catalyzes the hydrolysis of S-D-lactoyl-glutathione to form glutathione and D-lactic acid. The chain is Hydroxyacylglutathione hydrolase from Francisella tularensis subsp. tularensis (strain FSC 198).